The following is a 395-amino-acid chain: Tryptophan--tRNA ligase, cytoplasmic (395 aa).

The short motif at 91–100 (PSSDSMHLGH) is the 'HIGH' region element. A 'KMSKS' region motif is present at residues 275 to 279 (KMSAS). Phosphothreonine is present on residues T288 and T290.

It belongs to the class-I aminoacyl-tRNA synthetase family.

Its subcellular location is the cytoplasm. The catalysed reaction is tRNA(Trp) + L-tryptophan + ATP = L-tryptophyl-tRNA(Trp) + AMP + diphosphate + H(+). The protein is Tryptophan--tRNA ligase, cytoplasmic (wrs1) of Schizosaccharomyces pombe (strain 972 / ATCC 24843) (Fission yeast).